The primary structure comprises 943 residues: 2-oxoglutarate dehydrogenase E1 component (943 aa).

The protein belongs to the alpha-ketoglutarate dehydrogenase family. In terms of assembly, homodimer. Part of the 2-oxoglutarate dehydrogenase (OGDH) complex composed of E1 (2-oxoglutarate dehydrogenase), E2 (dihydrolipoamide succinyltransferase) and E3 (dihydrolipoamide dehydrogenase); the complex contains multiple copies of the three enzymatic components (E1, E2 and E3). Requires thiamine diphosphate as cofactor.

The catalysed reaction is N(6)-[(R)-lipoyl]-L-lysyl-[protein] + 2-oxoglutarate + H(+) = N(6)-[(R)-S(8)-succinyldihydrolipoyl]-L-lysyl-[protein] + CO2. In terms of biological role, E1 component of the 2-oxoglutarate dehydrogenase (OGDH) complex which catalyzes the decarboxylation of 2-oxoglutarate, the first step in the conversion of 2-oxoglutarate to succinyl-CoA and CO(2). The sequence is that of 2-oxoglutarate dehydrogenase E1 component (sucA) from Azotobacter vinelandii.